A 236-amino-acid chain; its full sequence is Endo-1,4-beta-xylanase 3 (236 aa).

The first 45 residues, M1–R45, serve as a signal peptide directing secretion. N-linked (GlcNAc...) asparagine glycans are attached at residues N39 and N106. Residues G46 to R236 enclose the GH11 domain. The active-site Nucleophile is E131. Catalysis depends on E223, which acts as the Proton donor.

The protein belongs to the glycosyl hydrolase 11 (cellulase G) family.

Its subcellular location is the secreted. It carries out the reaction Endohydrolysis of (1-&gt;4)-beta-D-xylosidic linkages in xylans.. It functions in the pathway glycan degradation; xylan degradation. Endo-1,4-beta-xylanase involved in the hydrolysis of xylan, a major structural heterogeneous polysaccharide found in plant biomass representing the second most abundant polysaccharide in the biosphere, after cellulose. In Pyricularia grisea (Crabgrass-specific blast fungus), this protein is Endo-1,4-beta-xylanase 3 (XYL3).